Here is a 127-residue protein sequence, read N- to C-terminus: MAKPTRKRRVKKNIESGIAHIHATFNNTIVMITDVHGNAIAWSSAGALGFKGSRKSTPFAAQMASEAAAKSAQEHGLKTVEVTVKGPGSGRESAIRALAAAGLEVTAIRDVTPVPHNGARPPKRRRV.

Belongs to the universal ribosomal protein uS11 family. In terms of assembly, part of the 30S ribosomal subunit. Interacts with proteins S7 and S18. Binds to IF-3.

Located on the platform of the 30S subunit, it bridges several disparate RNA helices of the 16S rRNA. Forms part of the Shine-Dalgarno cleft in the 70S ribosome. The polypeptide is Small ribosomal subunit protein uS11 (Streptococcus suis (strain 98HAH33)).